The chain runs to 299 residues: UDP-N-acetylenolpyruvoylglucosamine reductase (299 aa).

Residues 28-193 (KVGGPADILA…LSAKFELQAG (166 aa)) enclose the FAD-binding PCMH-type domain. Residue arginine 172 is part of the active site. Catalysis depends on serine 222, which acts as the Proton donor. Residue glutamate 292 is part of the active site.

FAD is required as a cofactor.

It localises to the cytoplasm. The catalysed reaction is UDP-N-acetyl-alpha-D-muramate + NADP(+) = UDP-N-acetyl-3-O-(1-carboxyvinyl)-alpha-D-glucosamine + NADPH + H(+). The protein operates within cell wall biogenesis; peptidoglycan biosynthesis. In terms of biological role, cell wall formation. In Lactococcus lactis subsp. cremoris (strain MG1363), this protein is UDP-N-acetylenolpyruvoylglucosamine reductase.